The sequence spans 345 residues: Sorting nexin-15 (345 aa).

Positions 1-130 (MSRQAKDDFL…EFFRGGEVTR (130 aa)) constitute a PX domain. Position 105 is an omega-N-methylarginine (Arg105). Positions 133 to 163 (EVSGDLHILPPPLIPTPPPDEPRVQPHETWL) are disordered. The span at 141–151 (LPPPLIPTPPP) shows a compositional bias: pro residues. Phosphoserine is present on residues Ser208 and Ser234. The interval 226–274 (SKEEGAGPSPTHIGELAALEAGSGRPDQEPWEPGGQAEEDDEEGEPAPA) is disordered. In terms of domain architecture, MIT spans 272–345 (APAYLSQATE…AEEILHLHLS (74 aa)).

This sequence belongs to the sorting nexin family.

May be involved in several stages of intracellular trafficking. Overexpression of SNX15 disrupts the normal trafficking of proteins from the plasma membrane to recycling endosomes or the TGN. This chain is Sorting nexin-15 (SNX15), found in Bos taurus (Bovine).